We begin with the raw amino-acid sequence, 152 residues long: Deoxyuridine 5'-triphosphate nucleotidohydrolase (152 aa).

Residues 62-64 (RSG), asparagine 75, and 79-81 (TVD) contribute to the substrate site.

This sequence belongs to the dUTPase family. Mg(2+) is required as a cofactor.

The enzyme catalyses dUTP + H2O = dUMP + diphosphate + H(+). It functions in the pathway pyrimidine metabolism; dUMP biosynthesis; dUMP from dCTP (dUTP route): step 2/2. This enzyme is involved in nucleotide metabolism: it produces dUMP, the immediate precursor of thymidine nucleotides and it decreases the intracellular concentration of dUTP so that uracil cannot be incorporated into DNA. The protein is Deoxyuridine 5'-triphosphate nucleotidohydrolase of Leifsonia xyli subsp. xyli (strain CTCB07).